The following is a 1294-amino-acid chain: MEAEIVNVRPQLGFIQRMVPALLPVLLVSVGYIDPGKWVANIEGGARFGYDLVAITLLFNFAAILCQYVAARISVVTGKHLAQICNEEYDKWTCMFLGIQAEFSAILLDLTMVVGVAHALNLLFGVELSTGVFLAAMDAFLFPVFASFLENGMANTVSIYSAGLVLLLYVSGVLLSQSEIPLSMNGVLTRLNGESAFALMGLLGASIVPHNFYIHSYFAGESTSSSDVDKSSLCQDHLFAIFGVFSGLSLVNYVLMNAAANVFHSTGLVVLTFHDALSLMEQVFMSPLIPVVFLMLLFFSSQITALAWAFGGEVVLHDFLKIEIPAWLHRATIRILAVAPALYCVWTSGADGIYQLLIFTQVLVAMMLPCSVIPLFRIASSRQIMGVHKIPQVGEFLALTTFLGFLGLNVVFVVEMVFGSSDWAGGLRWNTVMGTSIQYTTLLVSSCASLCLILWLAATPLKSASNRAEAQIWNMDAQNALSYPSVQEEEIERTETRRNEDESIVRLESRVKDQLDTTSVTSSVYDLPENILMTDQEIRSSPPEERELDVKYSTSQVSSLKEDSDVKEQSVLQSTVVNEVSDKDLIVETKMAKIEPMSPVEKIVSMENNSKFIEKDVEGVSWETEEATKAAPTSNFTVGSDGPPSFRSLSGEGGSGTGSLSRLQGLGRAARRHLSAILDEFWGHLYDFHGQLVAEARAKKLDQLFGTDQKSASSMKADSFGKDISSGYCMSPTAKGMDSQMTSSLYDSLKQQRTPGSIDSLYGLQRGSSPSPLVNRMQMLGAYGNTTNNNNAYELSERRYSSLRAPSSSEGWEHQQPATVHGYQMKSYVDNLAKERLEALQSRGEIPTSRSMALGTLSYTQQLALALKQKSQNGLTPGPAPGFENFAGSRSISRQSERSYYGVPSSGNTDTVGAAVANEKKYSSMPDISGLSMSARNMHLPNNKSGYWDPSSGGGGYGASYGRLSNESSLYSNLGSRVGVPSTYDDISQSRGGYRDAYSLPQSATTGTGSLWSRQPFEQFGVAERNGAVGEELRNRSNPINIDNNASSNVDAEAKLLQSFRHCILKLIKLEGSEWLFGQSDGVDEELIDRVAAREKFIYEAEAREINQVGHMGEPLISSVPNCGDGCVWRADLIVSFGVWCIHRVLDLSLMESRPELWGKYTYVLNRLQGVIDPAFSKLRTPMTPCFCLQIPASHQRASPTSANGMLPPAAKPAKGKCTTAVTLLDLIKDVEMAISCRKGRTGTAAGDVAFPKGKENLASVLKRYKRRLSNKPVGMNQDGPGSRKNVTAYGSLG.

At 1-12 (MEAEIVNVRPQL) the chain is on the cytoplasmic side. A helical membrane pass occupies residues 13-33 (GFIQRMVPALLPVLLVSVGYI). At 34 to 50 (DPGKWVANIEGGARFGY) the chain is on the extracellular side. The chain crosses the membrane as a helical span at residues 51-71 (DLVAITLLFNFAAILCQYVAA). Over 72–105 (RISVVTGKHLAQICNEEYDKWTCMFLGIQAEFSA) the chain is Cytoplasmic. A helical transmembrane segment spans residues 106–126 (ILLDLTMVVGVAHALNLLFGV). Residue glutamate 127 is a topological domain, extracellular. A helical membrane pass occupies residues 128 to 148 (LSTGVFLAAMDAFLFPVFASF). Over 149-155 (LENGMAN) the chain is Cytoplasmic. A helical transmembrane segment spans residues 156 to 176 (TVSIYSAGLVLLLYVSGVLLS). Residues 177–194 (QSEIPLSMNGVLTRLNGE) are Extracellular-facing. A helical transmembrane segment spans residues 195–215 (SAFALMGLLGASIVPHNFYIH). The Cytoplasmic portion of the chain corresponds to 216–237 (SYFAGESTSSSDVDKSSLCQDH). The chain crosses the membrane as a helical span at residues 238-258 (LFAIFGVFSGLSLVNYVLMNA). At 259-287 (AANVFHSTGLVVLTFHDALSLMEQVFMSP) the chain is on the extracellular side. Residues 288–308 (LIPVVFLMLLFFSSQITALAW) traverse the membrane as a helical segment. Residues 309–334 (AFGGEVVLHDFLKIEIPAWLHRATIR) are Cytoplasmic-facing. Helical transmembrane passes span 335–355 (ILAV…GIYQ) and 356–376 (LLIF…IPLF). Residues 377–397 (RIASSRQIMGVHKIPQVGEFL) lie on the Cytoplasmic side of the membrane. The helical transmembrane segment at 398–418 (ALTTFLGFLGLNVVFVVEMVF) threads the bilayer. At 419 to 440 (GSSDWAGGLRWNTVMGTSIQYT) the chain is on the extracellular side. The helical transmembrane segment at 441–461 (TLLVSSCASLCLILWLAATPL) threads the bilayer. Over 462–1294 (KSASNRAEAQ…KNVTAYGSLG (833 aa)) the chain is Cytoplasmic. 2 disordered regions span residues 534-561 (TDQE…SSLK) and 623-662 (ETEE…SLSR). Positions 536–550 (QEIRSSPPEERELDV) are enriched in basic and acidic residues. Phosphoserine is present on residues serine 645, serine 659, and serine 757. Threonine 819 is subject to Phosphothreonine. Serine 924 carries the post-translational modification Phosphoserine. A Nuclear localization signal motif is present at residues 1262–1269 (LKRYKRRL). The disordered stretch occupies residues 1269-1294 (LSNKPVGMNQDGPGSRKNVTAYGSLG). At serine 1283 the chain carries Phosphoserine.

Belongs to the NRAMP (TC 2.A.55) family. As to quaternary structure, interacts (via NLS) with ETR1. Interacts (via C-terminus) with EER5 and the COP9 signalosome subunits CSN3, CSN6A and CSN6B. Interacts with ETP1 and ETP2. Interacts with CTR1. Interacts with all members of the ethylene receptor family, including ETR1, ETR2, ERS1, ERS2 and EIN4. Binds to MRF3/ECIP1. In terms of assembly, interacts with several P-body components, such as XRN4/EIN5, PAB2, PAB4 and PAB8. Binds to ENAP1 in the presence of ethylene; this reaction facilitates its association with histone. In terms of processing, phosphorylated by CTR1 on at least 4 sites. Phosphorylation of Ser-645 and Ser-924 is involved in repressing EIN2 signaling. Loss of phosphorylation results in nuclear localization of the C-terminus of EIN2. Localized to the guard cells after methyl jasmonate treatment.

The protein resides in the endoplasmic reticulum membrane. Its subcellular location is the nucleus. The protein localises to the cytoplasm. In terms of biological role, central factor in signaling pathways regulated by ethylene (ET) and involved in various processes including development, plant defense, senescence, nucleotide sugar flux, and tropisms. Necessary for ethylene-mediated gene regulation, and for the induction of some genes by ozone. Acts downstream of ET receptors, and upstream of ethylene regulated transcription factors. Required for cytokinin-mediated processes. Seems to be implicated in cross-talk between ET, jasmonate and other pathways. Probably not involved in iron uptake. Has a short half-life and undergoes rapid proteasome-mediated turnover in the absence of ethylene. Required for ethylene-induced EIN3 stabilization via proteasomal degradation of EBF1/EBF2 proteins. Regulates the leaf senescence induced by methyl jasmonate, ethylene and abscisic acid. Required during salt stress to confer resistance. Its function is as follows. Trafficking signal inducing ethylene response. The nuclear localization is both necessary and sufficient to activate EIN3-mediated transcription and ethylene responses. Involved in ethylene (ET)-mediated signaling pathways by triggering histone acetylation of H3K14 and H3K23 in an ENAP1-dependent manner, thus influencing the expression of ethylene-responsive genes. Necessary and sufficient for 3'-UTR-mediated translational repression of EBF1 and EBF2 mRNAs. Ethylene induces EIN2-CEND to associate with 3' UTRs in cytoplasmic foci and target EBF1/2 mRNAs to cytoplasmic processing-body (P-body). MPK6 regulates the cleavage and nuclear translocation of EIN2-CEND under methyl jasmonate treatment. Required for EIN3 accumulation. The polypeptide is Ethylene-insensitive protein 2 (Arabidopsis thaliana (Mouse-ear cress)).